The sequence spans 227 residues: PKHD-type hydroxylase Bamb_4479 (227 aa).

The Fe2OG dioxygenase domain occupies Gln-80–Ser-179. Fe cation is bound by residues His-98, Asp-100, and His-160. Arg-170 is a 2-oxoglutarate binding site.

It depends on Fe(2+) as a cofactor. L-ascorbate is required as a cofactor.

This Burkholderia ambifaria (strain ATCC BAA-244 / DSM 16087 / CCUG 44356 / LMG 19182 / AMMD) (Burkholderia cepacia (strain AMMD)) protein is PKHD-type hydroxylase Bamb_4479.